Consider the following 227-residue polypeptide: PKHD-type hydroxylase GOX0559 (227 aa).

The region spanning 78–178 (RVYPPLFNRY…RWASFFWSQS (101 aa)) is the Fe2OG dioxygenase domain. Fe cation-binding residues include H96, D98, and H159. Residue R169 participates in 2-oxoglutarate binding.

Fe(2+) serves as cofactor. It depends on L-ascorbate as a cofactor.

This Gluconobacter oxydans (strain 621H) (Gluconobacter suboxydans) protein is PKHD-type hydroxylase GOX0559.